Here is a 176-residue protein sequence, read N- to C-terminus: MTNIRKSHPLLKIINDSFIDLPTPSNISSWWNFGSLLGICLVLQISTGLFLAMHYTSDTATAFNSVTHISRDVNYGWVLRYLHANGASMFFICLYLHVGRGLYYGSYLYKETWNVGVILLFATMATAFMGYVLPWGQMSFWGATVITNLLSAIPYIGTDLVEWIWGGFSVDKATLT.

Helical transmembrane passes span 33-53, 77-98, and 113-133; these read FGSL…FLAM, WVLR…YLHV, and WNVG…GYVL. Heme b contacts are provided by H83 and H97.

This sequence belongs to the cytochrome b family. In terms of assembly, the cytochrome bc1 complex contains 11 subunits: 3 respiratory subunits (MT-CYB, CYC1 and UQCRFS1), 2 core proteins (UQCRC1 and UQCRC2) and 6 low-molecular weight proteins (UQCRH/QCR6, UQCRB/QCR7, UQCRQ/QCR8, UQCR10/QCR9, UQCR11/QCR10 and a cleavage product of UQCRFS1). This cytochrome bc1 complex then forms a dimer. The cofactor is heme b.

The protein resides in the mitochondrion inner membrane. In terms of biological role, component of the ubiquinol-cytochrome c reductase complex (complex III or cytochrome b-c1 complex) that is part of the mitochondrial respiratory chain. The b-c1 complex mediates electron transfer from ubiquinol to cytochrome c. Contributes to the generation of a proton gradient across the mitochondrial membrane that is then used for ATP synthesis. This Corynorhinus rafinesquii (Rafinesque's big-eared bat) protein is Cytochrome b (MT-CYB).